The primary structure comprises 310 residues: tRNA pseudouridine synthase B (310 aa).

Residue aspartate 38 is the Nucleophile of the active site.

Belongs to the pseudouridine synthase TruB family. Type 1 subfamily.

It carries out the reaction uridine(55) in tRNA = pseudouridine(55) in tRNA. Its function is as follows. Responsible for synthesis of pseudouridine from uracil-55 in the psi GC loop of transfer RNAs. The protein is tRNA pseudouridine synthase B of Geotalea uraniireducens (strain Rf4) (Geobacter uraniireducens).